We begin with the raw amino-acid sequence, 498 residues long: Cobyric acid synthase (498 aa).

Residues 257–447 enclose the GATase cobBQ-type domain; sequence DLEIAVLRLP…LHGLLDNGPW (191 aa). The Nucleophile role is filled by Cys338. His439 is an active-site residue.

It belongs to the CobB/CobQ family. CobQ subfamily.

It participates in cofactor biosynthesis; adenosylcobalamin biosynthesis. Functionally, catalyzes amidations at positions B, D, E, and G on adenosylcobyrinic A,C-diamide. NH(2) groups are provided by glutamine, and one molecule of ATP is hydrogenolyzed for each amidation. The protein is Cobyric acid synthase of Synechococcus sp. (strain CC9605).